Reading from the N-terminus, the 372-residue chain is UDP-N-acetylglucosamine 2-epimerase (372 aa).

Substrate-binding positions include Arg10, Lys15, Asp95, Glu117, His212, Gln270, Phe275, 289 to 291 (SGG), Glu295, and Arg312.

The protein belongs to the UDP-N-acetylglucosamine 2-epimerase family.

The enzyme catalyses UDP-N-acetyl-alpha-D-glucosamine = UDP-N-acetyl-alpha-D-mannosamine. The protein operates within capsule biogenesis; capsule polysaccharide biosynthesis. With respect to regulation, activated by UDP-GlcNAc and inhibited by 2-acetamidoglucal and UDP. Activity is strongly decreased in the presence of Co(2+) and abolished in the presence of Mn(2+) or Zn(2+). Catalyzes the interconversion between UDP-N-acetylglucosamine (UDP-GlcNAc) and UDP-N-acetylmannosamine (UDP-ManNAc). Involved in the biosynthesis of the capsular polysaccharides. In vitro, can also use several chemoenzymatically synthesized UDP-ManNAc derivatives as substrates, with lower efficiency. This chain is UDP-N-acetylglucosamine 2-epimerase, found in Neisseria meningitidis serogroup A / serotype 4A (strain DSM 15465 / Z2491).